The primary structure comprises 295 residues: Small ribosomal subunit biogenesis GTPase RsgA (295 aa).

One can recognise a CP-type G domain in the interval 68 to 228 (KNLLTKPHVA…VVDTPGFANL (161 aa)). GTP is bound by residues 117 to 120 (NKMD) and 170 to 178 (GLSGVGKSS). The Zn(2+) site is built by cysteine 250, cysteine 255, histidine 257, and cysteine 263.

It belongs to the TRAFAC class YlqF/YawG GTPase family. RsgA subfamily. In terms of assembly, monomer. Associates with 30S ribosomal subunit, binds 16S rRNA. Requires Zn(2+) as cofactor.

The protein resides in the cytoplasm. In terms of biological role, one of several proteins that assist in the late maturation steps of the functional core of the 30S ribosomal subunit. Helps release RbfA from mature subunits. May play a role in the assembly of ribosomal proteins into the subunit. Circularly permuted GTPase that catalyzes slow GTP hydrolysis, GTPase activity is stimulated by the 30S ribosomal subunit. This is Small ribosomal subunit biogenesis GTPase RsgA from Thermotoga petrophila (strain ATCC BAA-488 / DSM 13995 / JCM 10881 / RKU-1).